A 224-amino-acid polypeptide reads, in one-letter code: ATP-dependent dethiobiotin synthetase BioD (224 aa).

Threonine 18 lines the Mg(2+) pocket. Residue lysine 39 is part of the active site. Serine 43 is a substrate binding site. The Mg(2+) site is built by aspartate 56 and glutamate 117. Residues aspartate 56, 117 to 120 (EGVG), and 177 to 178 (NE) contribute to the ATP site.

Belongs to the dethiobiotin synthetase family. In terms of assembly, homodimer. It depends on Mg(2+) as a cofactor.

The protein localises to the cytoplasm. It carries out the reaction (7R,8S)-7,8-diammoniononanoate + CO2 + ATP = (4R,5S)-dethiobiotin + ADP + phosphate + 3 H(+). It participates in cofactor biosynthesis; biotin biosynthesis; biotin from 7,8-diaminononanoate: step 1/2. Catalyzes a mechanistically unusual reaction, the ATP-dependent insertion of CO2 between the N7 and N8 nitrogen atoms of 7,8-diaminopelargonic acid (DAPA, also called 7,8-diammoniononanoate) to form a ureido ring. In Xanthomonas euvesicatoria pv. vesicatoria (strain 85-10) (Xanthomonas campestris pv. vesicatoria), this protein is ATP-dependent dethiobiotin synthetase BioD.